A 332-amino-acid polypeptide reads, in one-letter code: Fructose-1,6-bisphosphatase class 1 (332 aa).

Mg(2+) is bound by residues Glu89, Asp110, Leu112, and Asp113. Substrate is bound by residues 113-116 (DGSS), Asn206, Tyr239, 257-259 (YLY), and Lys269. Mg(2+) is bound at residue Glu275.

Belongs to the FBPase class 1 family. In terms of assembly, homotetramer. Mg(2+) is required as a cofactor.

It localises to the cytoplasm. It catalyses the reaction beta-D-fructose 1,6-bisphosphate + H2O = beta-D-fructose 6-phosphate + phosphate. The protein operates within carbohydrate biosynthesis; gluconeogenesis. The protein is Fructose-1,6-bisphosphatase class 1 of Enterobacter sp. (strain 638).